A 327-amino-acid polypeptide reads, in one-letter code: E3 ubiquitin-protein ligase ZNRF4 (327 aa).

The first 28 residues, 1-28 (MARFAWTRVAPVALVTFWLVLSLSPTDA), serve as a signal peptide directing secretion. The Lumenal segment spans residues 29-150 (QVNLSSVDFL…EPCPDPECHP (122 aa)). Asn-31 is a glycosylation site (N-linked (GlcNAc...) asparagine). A helical membrane pass occupies residues 151 to 171 (VVVASWALARALALAASTLFV). The Cytoplasmic portion of the chain corresponds to 172 to 327 (LRQLWPWVRG…AQSEATSELS (156 aa)). An RING-type; atypical zinc finger spans residues 209-252 (CAICLDDYEEGERLKILPCAHAYHCRCIDPWFSRAAQRSCPLCK). The span at 256–265 (ASTHDGSTDG) shows a compositional bias: polar residues. A disordered region spans residues 256-279 (ASTHDGSTDGSVGGEEPPLPGHRP).

Interacts with CANX. Expressed exclusively in spermatids (at protein level).

It is found in the endoplasmic reticulum membrane. It carries out the reaction S-ubiquitinyl-[E2 ubiquitin-conjugating enzyme]-L-cysteine + [acceptor protein]-L-lysine = [E2 ubiquitin-conjugating enzyme]-L-cysteine + N(6)-ubiquitinyl-[acceptor protein]-L-lysine.. Its pathway is protein modification; protein ubiquitination. Its function is as follows. E3 ubiquitin-protein ligase that acts as a negative regulator of NOD2 signaling by mediating ubiquitination and degradation of RIPK2. Also catalyzes ubiquitination and proteasomal degradation of CANX within the endoplasmic reticulum. Could have a role in spermatogenesis. This is E3 ubiquitin-protein ligase ZNRF4 from Mus musculus (Mouse).